The following is a 231-amino-acid chain: MKVFILACLVALALAREKDAFTVSSETGSISSEESVEHINEKLQKVKLMGQVQSEDVLQNKFHSGIQSEPQAIPYAQTISCSPIPQNIQPIAQPPVVPTVGPIISPELESFLKAKATVLPKHKQMPFLNSETVLRLFNSQIPSLDLANLHLPQSPAQLQAQIVQAFPQTPAVVSSQPQLSHPQSKSQYLVQQLAPLFQQGMPVQDLLQYLDLLLNPTLQFLATQQLHSTSV.

The N-terminal stretch at 1-15 (MKVFILACLVALALA) is a signal peptide. Position 24 is a phosphoserine (serine 24). Threonine 27 is subject to Phosphothreonine. 3 positions are modified to phosphoserine: serine 29, serine 31, and serine 32.

Belongs to the beta-casein family. Mammary gland specific. Secreted in milk.

It is found in the secreted. In terms of biological role, important role in determination of the surface properties of the casein micelles. This Rattus norvegicus (Rat) protein is Beta-casein (Csn2).